Here is an 89-residue protein sequence, read N- to C-terminus: Small ribosomal subunit protein uS14 (89 aa).

This sequence belongs to the universal ribosomal protein uS14 family. Part of the 30S ribosomal subunit. Contacts proteins S3 and S10.

Binds 16S rRNA, required for the assembly of 30S particles and may also be responsible for determining the conformation of the 16S rRNA at the A site. The polypeptide is Small ribosomal subunit protein uS14 (Chlorobaculum tepidum (strain ATCC 49652 / DSM 12025 / NBRC 103806 / TLS) (Chlorobium tepidum)).